Here is a 515-residue protein sequence, read N- to C-terminus: Cytoplasmic tRNA 2-thiolation protein 2 (515 aa).

Disordered regions lie at residues 1–24 and 188–217; these read MCQV…RPSR and LGAG…ARPP. Residue cysteine 2 is modified to N-acetylcysteine. 4 positions are modified to phosphoserine: serine 415, serine 419, serine 435, and serine 508.

It belongs to the CTU2/NCS2 family. Component of a complex at least composed of URM1, CTU2/NCS2 and CTU1/ATPBD3.

Its subcellular location is the cytoplasm. It participates in tRNA modification; 5-methoxycarbonylmethyl-2-thiouridine-tRNA biosynthesis. Plays a central role in 2-thiolation of mcm(5)S(2)U at tRNA wobble positions of tRNA(Lys), tRNA(Glu) and tRNA(Gln). May act by forming a heterodimer with CTU1/ATPBD3 that ligates sulfur from thiocarboxylated URM1 onto the uridine of tRNAs at wobble position. The sequence is that of Cytoplasmic tRNA 2-thiolation protein 2 from Homo sapiens (Human).